Reading from the N-terminus, the 909-residue chain is MERAMEQLNRLTRSLRRARTVELPDDNETAVYTLMPMVMADQHRSVSELLSNSKFDVNYAFGRVKRSLLHIAANCGSVECLVLLLKKGANPNYQDISGCTPLHLAARNGQKKCMSKLLEYSADVNICNNEGLTAIHWLAVNGRTELLHDLVQHVSDVDVEDAMGQTALHVACQNGHKTTVQCLLDSGADINRPNVSGATPLYFACSHGQRDTAQILLLRGAKYLSDKNGVTPLDLCVQGGYGETCEVLIQYHPRLFQTIIQMTQNEDLRENMLRQVLEHLSQQSESQYLKILTSLAEVATTNGHKLLSISSNYDAQMKSLLRIVRIFCHVFRIGPSSPSNGIDMGYNGNKTPRSQVFKPLELLWHSLDEWLVLIATELMKNKKDSTDITSILLKQKGQDQDGTSIPPFEPPGPGSYENLSTGTGESKPDVLGGKQEASADCQDVISMTANRLSAVIQAFYMCCSCQMPPGMTSPRFIEFVCKHDEVLKCFVNRNPKIIFDHFHFLLECPELMSRFMHIIKAQPFKDRCEWFYEHLHSGQPDSDMVHRPVNENDILLVHRDSIFRSSCEVVSKANCAKLKQGIAVRFHGEEGMGQGVVREWFDILSNEIVNPDYALFTQSADGTTFQPNSNSSVNPDHLNYFRFAGQILGLALNHRQLVNIYFTRSFYKHILGIPVNYQDVASIDPEYAKNLQWILDNDISDLGLELTFSVETDVFGAMEEVPLKPGGGSILVTQNNKAEYVQLVTELRMTRAIQPQINAFLQGFHMFIPPSLIQLFDEYELELLLSGMPEIDVSDWIKNTEYTSGYEREDPVIQWFWEVVEDITPEERVLLLQFVTGSSRVPHGGFANIMGGSGLQNFTIAAVPYTPNLLPTSSTCINMLKLPEYPSKEILKDRLLVALHCGSYGYTMA.

The tract at residues 1-21 is N-terminal helix important for homodimerization; sequence MERAMEQLNRLTRSLRRARTV. ANK repeat units lie at residues 23–55, 64–93, 97–126, 130–159, 163–192, 196–226, and 228–253; these read LPDD…NSKF, VKRS…NPNY, SGCT…DVNI, EGLT…DVDV, MGQT…DINR, SGAT…YLSD, and NGVT…QYHP. The interval 396-433 is disordered; it reads KGQDQDGTSIPPFEPPGPGSYENLSTGTGESKPDVLGG. Residues 574–909 enclose the HECT domain; the sequence is NCAKLKQGIA…HCGSYGYTMA (336 aa). Cys876 serves as the catalytic Glycyl thioester intermediate.

Homodimer. The homodimer is autoinhibited and stabilized by its N-terminal helix. Interacts with RAB1 (RAB1A, RAB1B or RAB1C), RAB4 (RAB4A or RAB4B) and RAB11 (RAB11A or RAB11B); in a GTP-dependent manner. Interacts with the 26S proteasomal complex through the 20S core proteasomal subunit. Interacts with RARB. Autoubiquitinated.

It is found in the golgi apparatus. Its subcellular location is the golgi stack membrane. The protein resides in the cytoplasm. It localises to the endoplasmic reticulum. The enzyme catalyses S-ubiquitinyl-[E2 ubiquitin-conjugating enzyme]-L-cysteine + [acceptor protein]-L-lysine = [E2 ubiquitin-conjugating enzyme]-L-cysteine + N(6)-ubiquitinyl-[acceptor protein]-L-lysine.. Its pathway is protein modification; protein ubiquitination. In terms of biological role, E3 ubiquitin-protein ligase involved in Golgi membrane fusion and regulation of small GTPases. Acts as a regulator of Golgi membrane dynamics during the cell cycle: recruited to Golgi membrane by Rab proteins and regulates postmitotic Golgi membrane fusion. Acts by mediating ubiquitination during mitotic Golgi disassembly, ubiquitination serving as a signal for Golgi reassembly later, after cell division. Specifically binds GTP-bound RAC1, mediating ubiquitination and subsequent degradation of active RAC1, thereby playing a role in host defense against pathogens. May also act as a transcription regulator via its interaction with RARB. The chain is E3 ubiquitin-protein ligase HACE1 (HACE1) from Bos taurus (Bovine).